Reading from the N-terminus, the 416-residue chain is Formyl-CoA:oxalate CoA-transferase (416 aa).

CoA is bound by residues 17-18 (QS), Arg-38, 72-75 (LNTK), 96-98 (NFH), His-104, and 137-140 (KAYE). Asp-169 serves as the catalytic Nucleophile. 248–250 (GGQ) is a binding site for substrate. CoA is bound at residue 273 to 275 (QEQ).

It belongs to the CoA-transferase III family. Frc subfamily. In terms of assembly, homodimer.

The catalysed reaction is formyl-CoA + oxalate = oxalyl-CoA + formate. It participates in metabolic intermediate degradation; oxalate degradation; CO(2) and formate from oxalate: step 1/2. Involved in the catabolism of oxalate and in the adapatation to low pH via the induction of the oxalate-dependent acid tolerance response (ATR). Catalyzes the transfer of the CoA moiety from formyl-CoA to oxalate. The chain is Formyl-CoA:oxalate CoA-transferase from Escherichia coli O6:H1 (strain CFT073 / ATCC 700928 / UPEC).